Reading from the N-terminus, the 272-residue chain is Hydroxyethylthiazole kinase (272 aa).

Met62 lines the substrate pocket. Residues Arg138 and Thr183 each contribute to the ATP site. Gly210 contributes to the substrate binding site.

The protein belongs to the Thz kinase family. Mg(2+) is required as a cofactor.

It carries out the reaction 5-(2-hydroxyethyl)-4-methylthiazole + ATP = 4-methyl-5-(2-phosphooxyethyl)-thiazole + ADP + H(+). It functions in the pathway cofactor biosynthesis; thiamine diphosphate biosynthesis; 4-methyl-5-(2-phosphoethyl)-thiazole from 5-(2-hydroxyethyl)-4-methylthiazole: step 1/1. Its function is as follows. Catalyzes the phosphorylation of the hydroxyl group of 4-methyl-5-beta-hydroxyethylthiazole (THZ). The polypeptide is Hydroxyethylthiazole kinase (Dichelobacter nodosus (strain VCS1703A)).